Here is a 193-residue protein sequence, read N- to C-terminus: Segregation and condensation protein B (193 aa).

The protein belongs to the ScpB family. In terms of assembly, homodimer. Homodimerization may be required to stabilize the binding of ScpA to the Smc head domains. Component of a cohesin-like complex composed of ScpA, ScpB and the Smc homodimer, in which ScpA and ScpB bind to the head domain of Smc. The presence of the three proteins is required for the association of the complex with DNA.

The protein resides in the cytoplasm. Functionally, participates in chromosomal partition during cell division. May act via the formation of a condensin-like complex containing Smc and ScpA that pull DNA away from mid-cell into both cell halves. This Clostridium botulinum (strain ATCC 19397 / Type A) protein is Segregation and condensation protein B.